The primary structure comprises 416 residues: N-acetylmuramoyl-L-alanine amidase AmiC (416 aa).

The first 26 residues, 1-26 (MIKLTRRQIIRRTAGTLFALSPIASA), serve as a signal peptide directing secretion. The disordered stretch occupies residues 166-191 (RGSPEADLAQNTTPQPGRGRNGRRPV). The 214-residue stretch at 192-405 (IMLDPGHGGE…CAQSIASGVQ (214 aa)) folds into the MurNAc-LAA domain.

Belongs to the N-acetylmuramoyl-L-alanine amidase 3 family.

The protein localises to the periplasm. It carries out the reaction Hydrolyzes the link between N-acetylmuramoyl residues and L-amino acid residues in certain cell-wall glycopeptides.. In terms of biological role, cell-wall hydrolase involved in septum cleavage during cell division. This Neisseria meningitidis serogroup B (strain ATCC BAA-335 / MC58) protein is N-acetylmuramoyl-L-alanine amidase AmiC (amiC).